Reading from the N-terminus, the 337-residue chain is Protein AMBP (337 aa).

Positions 1-4 are cleaved as a signal peptide; sequence AVSA. Positions 38 and 96 each coordinate 3-hydroxy-L-kynurenine. Cys76 and Cys173 are disulfide-bonded. Asn100 carries an N-linked (GlcNAc...) asparagine glycan. The 3-hydroxy-L-kynurenine site is built by Lys122 and Lys134. O-linked (Xyl...) (chondroitin sulfate) serine glycosylation is present at Ser200. 6 disulfide bridges follow: Cys216–Cys266, Cys225–Cys249, Cys241–Cys262, Cys272–Cys322, Cys281–Cys305, and Cys297–Cys318. 2 BPTI/Kunitz inhibitor domains span residues 216 to 266 and 272 to 322; these read CQLG…LQTC and CSLP…KEYC. Asn235 carries an N-linked (GlcNAc...) asparagine glycan.

In the N-terminal section; belongs to the calycin superfamily. Lipocalin family. As to quaternary structure, monomer. Homodimer. In plasma, it occurs as a monomer or dimer and in covalently-linked complexes with immunoglobulin A (IgA), ALB/albumin and F2/prothrombin. Chromophore-bound alpha-1-microglobulin interacts with the constant region of immunoglobulin A. Chromophore-bound alpha-1-microglobulin interacts with ALB with molar ratio 2:1 and 1:1; this interaction does not prevent fatty acid binding to ALB. Interacts with F2/prothrombin (via N-terminus) with molar ratio 2:1 and 1:1; this interaction does not prevent the activation of prothrombin to thrombin. Interacts with NDUFAB1, a subunit of mitochondrial complex I. Interacts with FN1. I-alpha-I plasma protease inhibitors are assembled from one or two heavy chains (HC) and one light chain, bikunin. Inter-alpha-inhibitor (I-alpha-I) is composed of ITIH1/HC1, ITIH2/HC2 and bikunin, and pre-alpha-inhibitor (P-alpha-I) of ITIH3/HC3 and bikunin. Interacts with TNFAIP6 (via Link domain). In terms of assembly, monomer. Also occurs as a complex with tryptase in mast cells. The precursor is proteolytically processed into separately functioning proteins. Post-translationally, proteolytically cleaved in the presence of oxyhemoglobin or MPO. In terms of processing, 3-hydroxykynurenine, an oxidized tryptophan metabolite that is common in biological fluids, reacts with Cys-53, Lys-111, Lys-137, and Lys-149 to form heterogeneous polycyclic chromophores including hydroxanthommatin. The reaction by alpha-1-microglobulin is autocatalytic; the human protein forms chromophore even when expressed in insect and bacterial cells. The chromophore can react with accessible cysteines forming non-reducible thioether cross-links with other molecules of alpha-1-microglobulin or with other proteins such as Ig alpha-1 chain C region 'Cys-352'. Heavy chains are interlinked with bikunin via a chondroitin 4-sulfate bridge to the C-terminal aspartate. Post-translationally, proteolytically cleaved by PRSS3 at Kunitz domain 2. Expressed by the liver and secreted in plasma.

Its subcellular location is the secreted. The protein localises to the endoplasmic reticulum. The protein resides in the cytoplasm. It localises to the cytosol. It is found in the cell membrane. Its subcellular location is the nucleus membrane. The protein localises to the mitochondrion inner membrane. The protein resides in the extracellular space. It localises to the extracellular matrix. In terms of biological role, antioxidant and tissue repair protein with reductase, heme-binding and radical-scavenging activities. Removes and protects against harmful oxidants and repairs macromolecules in intravascular and extravascular spaces and in intracellular compartments. Intravascularly, plays a regulatory role in red cell homeostasis by preventing heme- and reactive oxygen species-induced cell damage. Binds and degrades free heme to protect fetal and adult red blood cells from hemolysis. Reduces extracellular methemoglobin, a Fe3+ (ferric) form of hemoglobin that cannot bind oxygen, back to the Fe2+ (ferrous) form deoxyhemoglobin, which has oxygen-carrying potential. Upon acute inflammation, inhibits oxidation of low-density lipoprotein particles by MPO and limits vascular damage. Extravascularly, protects from oxidation products formed on extracellular matrix structures and cell membranes. Catalyzes the reduction of carbonyl groups on oxidized collagen fibers and preserves cellular and extracellular matrix ultrastructures. Importantly, counteracts the oxidative damage at blood-placenta interface, preventing leakage of free fetal hemoglobin into the maternal circulation. Intracellularly, has a role in maintaining mitochondrial redox homeostasis. Bound to complex I of the respiratory chain of mitochondria, may scavenge free radicals and preserve mitochondrial ATP synthesis. Protects renal tubule epithelial cells from heme-induced oxidative damage to mitochondria. Reduces cytochrome c from Fe3+ (ferric) to the Fe2+ (ferrous) state through formation of superoxide anion radicals in the presence of ascorbate or NADH/NADPH electron donor cofactors, ascorbate being the preferred cofactor. Has a chaperone role in facilitating the correct folding of bikunin in the endoplasmic reticulum compartment. Its function is as follows. Kunitz-type serine protease inhibitor and structural component of extracellular matrix with a role in extracellular space remodeling and cell adhesion. Among others, has antiprotease activity toward kallikrein, a protease involved in airway inflammation; inhibits GZMK/granzyme, a granule-stored serine protease involved in NK and T cell cytotoxic responses; and inhibits PLG/plasmin, a protease required for activation of matrix metalloproteinases. As part of I-alpha-I complex, provides for the heavy chains to be transferred from I-alpha-I complex to hyaluronan in the presence of TNFAIP6, in a dynamic process that releases free bikunin and remodels extracellular matrix proteoglycan structures. Free bikunin, but not its heavy chain-bound form, acts as a potent protease inhibitor in airway secretions. Part of hyaluronan-rich extracellular matrix that surrounds oocyte during cumulus oophorus expansion, an indispensable process for proper ovulation. Also inhibits calcium oxalate crystallization. Kunitz-type serine protease inhibitor. Has high catalytic efficiency for F10/blood coagulation factor Xa and may act as an anticoagulant by inhibiting prothrombin activation. Inhibits trypsin and mast cell CMA1/chymase and tryptase proteases. In Sus scrofa (Pig), this protein is Protein AMBP (AMBP).